We begin with the raw amino-acid sequence, 509 residues long: Steroid 17-alpha-hydroxylase/17,20 lyase (509 aa).

Asn-202 lines the substrate pocket. A heme-binding site is contributed by Cys-442.

Belongs to the cytochrome P450 family. Requires heme as cofactor.

It is found in the endoplasmic reticulum membrane. It localises to the microsome membrane. The catalysed reaction is a C21-steroid + reduced [NADPH--hemoprotein reductase] + O2 = a 17alpha-hydroxy-C21-steroid + oxidized [NADPH--hemoprotein reductase] + H2O + H(+). It carries out the reaction progesterone + reduced [NADPH--hemoprotein reductase] + O2 = 17alpha-hydroxyprogesterone + oxidized [NADPH--hemoprotein reductase] + H2O + H(+). It catalyses the reaction pregnenolone + reduced [NADPH--hemoprotein reductase] + O2 = 17alpha-hydroxypregnenolone + oxidized [NADPH--hemoprotein reductase] + H2O + H(+). The enzyme catalyses 17alpha-hydroxyprogesterone + reduced [NADPH--hemoprotein reductase] + O2 = androst-4-ene-3,17-dione + acetate + oxidized [NADPH--hemoprotein reductase] + H2O + 2 H(+). The catalysed reaction is 17alpha-hydroxyprogesterone + reduced [NADPH--hemoprotein reductase] + O2 = 16alpha,17alpha-dihydroxyprogesterone + oxidized [NADPH--hemoprotein reductase] + H2O + H(+). It carries out the reaction 16alpha,17alpha-dihydroxyprogesterone + reduced [NADPH--hemoprotein reductase] + O2 = 6beta,16alpha,17alpha-trihydroxyprogesterone + oxidized [NADPH--hemoprotein reductase] + H2O + H(+). It catalyses the reaction 17alpha-hydroxypregnenolone + reduced [NADPH--hemoprotein reductase] + O2 = 3beta-hydroxyandrost-5-en-17-one + acetate + oxidized [NADPH--hemoprotein reductase] + H2O + 2 H(+). The enzyme catalyses 16alpha,17alpha-dihydroxypregnenolone + reduced [NADPH--hemoprotein reductase] + O2 = 3beta,16alpha-dihydroxy-androst-5-en-17-one + acetate + oxidized [NADPH--hemoprotein reductase] + H2O + 2 H(+). The catalysed reaction is 3beta-hydroxyandrost-5-en-17-one + reduced [NADPH--hemoprotein reductase] + O2 = 3beta,16alpha-dihydroxy-androst-5-en-17-one + oxidized [NADPH--hemoprotein reductase] + H2O + H(+). It carries out the reaction androst-4-ene-3,17-dione + reduced [NADPH--hemoprotein reductase] + O2 = 16alpha-hydroxyandrost-4-ene-3,17-dione + oxidized [NADPH--hemoprotein reductase] + H2O + H(+). It participates in steroid hormone biosynthesis. Its pathway is steroid biosynthesis; glucocorticoid biosynthesis. Its activity is regulated as follows. Regulated predominantly by intracellular cAMP levels. The 17,20-lyase activity is stimulated by cytochrome b5, which acts as an allosteric effector increasing the Vmax of the lyase activity. Functionally, a cytochrome P450 monooxygenase involved in corticoid and androgen biosynthesis. Catalyzes 17-alpha hydroxylation of C21 steroids, which is common for both pathways. A second oxidative step, required only for androgen synthesis, involves an acyl-carbon cleavage. The 17-alpha hydroxy intermediates, as part of adrenal glucocorticoids biosynthesis pathway, are precursors of cortisol. Hydroxylates steroid hormones, pregnenolone and progesterone to form 17-alpha hydroxy metabolites, followed by the cleavage of the C17-C20 bond to form C19 steroids, dehydroepiandrosterone (DHEA) and androstenedione. Has 16-alpha hydroxylase activity. Catalyzes 16-alpha hydroxylation of 17-alpha hydroxy pregnenolone, followed by the cleavage of the C17-C20 bond to form 16-alpha-hydroxy DHEA. Also 16-alpha hydroxylates androgens, relevant for estriol synthesis. Mechanistically, uses molecular oxygen inserting one oxygen atom into a substrate, and reducing the second into a water molecule, with two electrons provided by NADPH via cytochrome P450 reductase (CPR; NADPH-ferrihemoprotein reductase). This is Steroid 17-alpha-hydroxylase/17,20 lyase (CYP17A1) from Bison bison (American bison).